We begin with the raw amino-acid sequence, 1098 residues long: Contactin-5 (1098 aa).

Positions 1–23 are cleaved as a signal peptide; the sequence is MASCWRLILFLSVTRWLSDYSEA. Ig-like C2-type domains are found at residues 98–189, 195–281, 299–384, 389–473, 479–568, and 570–659; these read PVFV…ATLQ, NFSG…RVLS, PKIE…GQLQ, PHWV…AELK, PSFE…LSVK, and PTRI…DSVS. Cys122 and Cys172 are disulfide-bonded. 2 N-linked (GlcNAc...) asparagine glycosylation sites follow: Asn137 and Asn195. Cystine bridges form between Cys216-Cys268 and Cys321-Cys368. Asn396, Asn448, and Asn539 each carry an N-linked (GlcNAc...) asparagine glycan. Cystine bridges form between Cys410-Cys457, Cys502-Cys550, and Cys592-Cys649. 4 consecutive Fibronectin type-III domains span residues 672 to 770, 775 to 872, 877 to 971, and 976 to 1066; these read PPGV…TNEA, APSN…SAEG, APTD…TKRH, and PPGN…SYSG. Asn778, Asn815, and Asn930 each carry an N-linked (GlcNAc...) asparagine glycan. Residues 956–982 are disordered; it reads GYGPPSREASTTTKRHPPREPPGNLRW. An N-linked (GlcNAc...) asparagine glycan is attached at Asn1001. Ser1071 carries GPI-anchor amidated serine lipidation. A propeptide spans 1072–1098 (removed in mature form); that stretch reads AQSTLHSLSKWSSVTLLLALMLPSSSW.

Belongs to the immunoglobulin superfamily. Contactin family. Interacts with PTPRG. Expressed in the nervous system. Preferentially expressed in the central auditory pathways.

Its subcellular location is the cell membrane. Contactins mediate cell surface interactions during nervous system development. Has some neurite outgrowth-promoting activity in the cerebral cortical neurons but not in hippocampal neurons. Involved in neuronal activity in the auditory system. The polypeptide is Contactin-5 (Cntn5) (Mus musculus (Mouse)).